We begin with the raw amino-acid sequence, 521 residues long: Putative FNIP repeat-containing protein L162 (521 aa).

2 FNIP repeats span residues 179-221 and 222-263; these read FNKS…LGYK and YNYP…MGGR.

The polypeptide is Putative FNIP repeat-containing protein L162 (Acanthamoeba polyphaga mimivirus (APMV)).